We begin with the raw amino-acid sequence, 162 residues long: uncharacterized protein (162 aa).

It is found in the cytoplasm. It localises to the nucleus. This is an uncharacterized protein from Schizosaccharomyces pombe (strain 972 / ATCC 24843) (Fission yeast).